The sequence spans 264 residues: Zinc import ATP-binding protein ZnuC (264 aa).

The ABC transporter domain maps to 20–235 (VQLKNIEVTF…PNFIHFFGDQ (216 aa)). 52-59 (GPNGGGKS) provides a ligand contact to ATP.

Belongs to the ABC transporter superfamily. Zinc importer (TC 3.A.1.15.5) family. In terms of assembly, the complex is composed of two ATP-binding proteins (ZnuC), two transmembrane proteins (ZnuB) and a solute-binding protein (ZnuA).

It is found in the cell inner membrane. The enzyme catalyses Zn(2+)(out) + ATP(in) + H2O(in) = Zn(2+)(in) + ADP(in) + phosphate(in) + H(+)(in). Functionally, part of the ABC transporter complex ZnuABC involved in zinc import. Responsible for energy coupling to the transport system. The chain is Zinc import ATP-binding protein ZnuC from Haemophilus ducreyi (strain 35000HP / ATCC 700724).